A 721-amino-acid polypeptide reads, in one-letter code: Catalase-peroxidase 1 (721 aa).

The segment at residues 98–223 (WHAAGSYRVA…LAAVQMGLIY (126 aa)) is a cross-link (tryptophyl-tyrosyl-methioninium (Trp-Tyr) (with M-249)). His99 serves as the catalytic Proton acceptor. The segment at residues 223 to 249 (YVNPEGVNGQPDPLRTAQDVRVTFGRM) is a cross-link (tryptophyl-tyrosyl-methioninium (Tyr-Met) (with W-98)). His264 lines the heme b pocket.

Belongs to the peroxidase family. Peroxidase/catalase subfamily. In terms of assembly, homodimer or homotetramer. Heme b serves as cofactor. Formation of the three residue Trp-Tyr-Met cross-link is important for the catalase, but not the peroxidase activity of the enzyme.

It carries out the reaction H2O2 + AH2 = A + 2 H2O. It catalyses the reaction 2 H2O2 = O2 + 2 H2O. Its function is as follows. Bifunctional enzyme with both catalase and broad-spectrum peroxidase activity. This chain is Catalase-peroxidase 1, found in Legionella pneumophila (strain Paris).